The following is a 401-amino-acid chain: Keratin-associated protein 10-4 (401 aa).

35 tandem repeats follow at residues C36–P40, C41–S45, C46–A50, C67–T71, C89–S93, C99–S103, C109–V113, C114–V118, C119–V123, C124–V128, C129–S133, C135–S139, C145–S149, C155–I159, C160–V164, C172–S176, C186–V190, C208–S212, C218–S222, C228–V232, C233–V237, C238–V242, C250–S254, C270–V274, C275–V279, C280–V284, C297–S301, C307–S311, C317–V321, C322–V326, C339–S343, C349–S353, C354–S358, C373–V377, and C391–A395. The 36 X 5 AA repeats of C-C-X(3) stretch occupies residues C36 to A395.

It belongs to the KRTAP type 10 family. Interacts with hair keratins. In terms of tissue distribution, restricted to hair root, not detected in any other tissues.

Functionally, in the hair cortex, hair keratin intermediate filaments are embedded in an interfilamentous matrix, consisting of hair keratin-associated proteins (KRTAP), which are essential for the formation of a rigid and resistant hair shaft through their extensive disulfide bond cross-linking with abundant cysteine residues of hair keratins. The matrix proteins include the high-sulfur and high-glycine-tyrosine keratins. This is Keratin-associated protein 10-4 (KRTAP10-4) from Homo sapiens (Human).